Here is a 567-residue protein sequence, read N- to C-terminus: Probable E3 ubiquitin-protein ligase ARI8 (567 aa).

The segment at methionine 1–glycine 27 is disordered. The span at alanine 18–glycine 27 shows a compositional bias: acidic residues. The segment at glycine 124–glutamate 337 is TRIAD supradomain. Zn(2+)-binding residues include cysteine 128, cysteine 131, cysteine 145, histidine 147, cysteine 150, cysteine 153, cysteine 173, cysteine 178, cysteine 217, cysteine 222, cysteine 239, cysteine 241, cysteine 246, cysteine 249, histidine 254, cysteine 259, cysteine 286, and cysteine 289. An RING-type 1 zinc finger spans residues cysteine 128–cysteine 178. The segment at glutamine 197 to cysteine 259 adopts an IBR-type zinc-finger fold. Residues cysteine 286 to cysteine 316 form an RING-type 2; atypical zinc finger. Cysteine 299 is a catalytic residue. Residues cysteine 304, cysteine 308, cysteine 313, cysteine 316, histidine 323, and cysteine 333 each coordinate Zn(2+). The segment at aspartate 514–histidine 543 is disordered. Positions serine 521 to serine 542 are enriched in low complexity. Residues aspartate 540–arginine 567 form a RanBP2-type zinc finger.

This sequence belongs to the RBR family. Ariadne subfamily. The cofactor is Zn(2+). In terms of tissue distribution, ubiquitous.

The catalysed reaction is [E2 ubiquitin-conjugating enzyme]-S-ubiquitinyl-L-cysteine + [acceptor protein]-L-lysine = [E2 ubiquitin-conjugating enzyme]-L-cysteine + [acceptor protein]-N(6)-ubiquitinyl-L-lysine.. Its pathway is protein modification; protein ubiquitination. Its function is as follows. Might act as an E3 ubiquitin-protein ligase, or as part of E3 complex, which accepts ubiquitin from specific E2 ubiquitin-conjugating enzymes and then transfers it to substrates. The polypeptide is Probable E3 ubiquitin-protein ligase ARI8 (ARI8) (Arabidopsis thaliana (Mouse-ear cress)).